Here is a 329-residue protein sequence, read N- to C-terminus: Carbonic anhydrase (329 aa).

The interval 1–108 is chloroplast transit peptide-like; sequence MSTASAFAIN…AAARIDQITA (108 aa).

This sequence belongs to the beta-class carbonic anhydrase family. In terms of assembly, homohexamer.

It localises to the cytoplasm. The enzyme catalyses hydrogencarbonate + H(+) = CO2 + H2O. Its function is as follows. Reversible hydration of carbon dioxide. The protein is Carbonic anhydrase of Flaveria pringlei.